A 213-amino-acid polypeptide reads, in one-letter code: ATP phosphoribosyltransferase (213 aa).

It belongs to the ATP phosphoribosyltransferase family. Short subfamily. Heteromultimer composed of HisG and HisZ subunits.

Its subcellular location is the cytoplasm. It carries out the reaction 1-(5-phospho-beta-D-ribosyl)-ATP + diphosphate = 5-phospho-alpha-D-ribose 1-diphosphate + ATP. It functions in the pathway amino-acid biosynthesis; L-histidine biosynthesis; L-histidine from 5-phospho-alpha-D-ribose 1-diphosphate: step 1/9. Functionally, catalyzes the condensation of ATP and 5-phosphoribose 1-diphosphate to form N'-(5'-phosphoribosyl)-ATP (PR-ATP). Has a crucial role in the pathway because the rate of histidine biosynthesis seems to be controlled primarily by regulation of HisG enzymatic activity. This chain is ATP phosphoribosyltransferase (hisG), found in Listeria innocua serovar 6a (strain ATCC BAA-680 / CLIP 11262).